The primary structure comprises 420 residues: Lactosylceramide alpha-2,3-sialyltransferase (420 aa).

The interval 1–39 (MRKKAAGGAERRPLKPRTEAAAAAPAGRAMPSDHSRMKL) is disordered. Topologically, residues 1–67 (MRKKAAGGAE…MRRPNLLLKD (67 aa)) are cytoplasmic. The span at 9–18 (AERRPLKPRT) shows a compositional bias: basic and acidic residues. The span at 20–29 (AAAAAPAGRA) shows a compositional bias: low complexity. Residues 68-88 (ILKCTLLLFGVWILFYILKLN) traverse the membrane as a helical segment. The Lumenal segment spans residues 89–420 (HTTEECDMKR…DLSGGIHSEF (332 aa)). Cysteines 197 and 355 form a disulfide. N238 carries N-linked (GlcNAc...) asparagine glycosylation.

Belongs to the glycosyltransferase 29 family.

The protein localises to the golgi apparatus membrane. It carries out the reaction a beta-D-Gal-(1-&gt;4)-beta-D-Glc-(1&lt;-&gt;1)-Cer(d18:1(4E)) + CMP-N-acetyl-beta-neuraminate = a ganglioside GM3 (d18:1(4E)) + CMP + H(+). The catalysed reaction is ganglioside GA2 (d18:1(4E)/18:0) + CMP-N-acetyl-beta-neuraminate = ganglioside GM2 (d18:1(4E)/18:0) + CMP + H(+). The enzyme catalyses a beta-D-Gal-(1&lt;-&gt;1')-ceramide + CMP-N-acetyl-beta-neuraminate = N-acetyl-alpha-neuraminosyl-(2-&gt;3)-beta-D-galactosyl-(1&lt;-&gt;1')-ceramide + CMP + H(+). It catalyses the reaction ganglioside GA1 (d18:1(4E)/18:0) + CMP-N-acetyl-beta-neuraminate = ganglioside GM1 (d18:1(4E)/18:0) + CMP + H(+). In terms of biological role, transfers the sialyl group (N-acetyl-alpha-neuraminyl or NeuAc) from CMP-NeuAc to the non-reducing terminal galactose (Gal) of glycosphingolipids forming gangliosides (important molecules involved in the regulation of multiple cellular processes, including cell proliferation and differentiation, apoptosis, embryogenesis, development, and oncogenesis). Mainly involved in the biosynthesis of ganglioside GM3 but can also use different glycolipids as substrate acceptors such as D-galactosylceramide (GalCer), asialo-GM2 (GA2) and asialo-GM1 (GA1), although less preferentially than beta-D-Gal-(1-&gt;4)-beta-D-Glc-(1&lt;-&gt;1)-Cer (LacCer). This Bos taurus (Bovine) protein is Lactosylceramide alpha-2,3-sialyltransferase (ST3GAL5).